Here is a 429-residue protein sequence, read N- to C-terminus: Glucan 1,3-beta-glucosidase (429 aa).

The N-terminal stretch at Met-1 to Ala-19 is a signal peptide. The propeptide occupies Gln-20–Arg-27. Glu-215 functions as the Proton donor in the catalytic mechanism. Cystine bridges form between Cys-299/Cys-425 and Cys-324/Cys-354. The active-site Nucleophile is Glu-316.

This sequence belongs to the glycosyl hydrolase 5 (cellulase A) family.

It localises to the secreted. It carries out the reaction Successive hydrolysis of beta-D-glucose units from the non-reducing ends of (1-&gt;3)-beta-D-glucans, releasing alpha-glucose.. Functionally, beta-glucanases participate in the metabolism of beta-glucan, the main structural component of the cell wall. It could also function biosynthetically as a transglycosylase. In Kluyveromyces lactis (strain ATCC 8585 / CBS 2359 / DSM 70799 / NBRC 1267 / NRRL Y-1140 / WM37) (Yeast), this protein is Glucan 1,3-beta-glucosidase.